The chain runs to 148 residues: MKIILTHEVSGLGAAGDVVDVKDGYARNYLIPRNFAIRWTKGGEKDVEQIRRARKIHEIQTIEQANEIKARLEGVKVRLAVRSGDAGRLFGSVTPADVASAIKASGGPEVDKRRIELGSPIKTLGAHETSVRLHPEVAAKVNIEVVAA.

Belongs to the bacterial ribosomal protein bL9 family.

Functionally, binds to the 23S rRNA. In Streptomyces avermitilis (strain ATCC 31267 / DSM 46492 / JCM 5070 / NBRC 14893 / NCIMB 12804 / NRRL 8165 / MA-4680), this protein is Large ribosomal subunit protein bL9.